Reading from the N-terminus, the 942-residue chain is Apolipoprotein B receptor (942 aa).

Disordered regions lie at residues 66-212, 240-269, 283-487, 501-607, and 671-942; these read GLRS…VTED, ERMVPMRDGERARAQGTQCPGAESEDQAML, DSLG…SPER, AGPE…VPWE, and EGRG…PKPQ. Basic and acidic residues-rich tracts occupy residues 106-123, 132-143, 240-252, 312-330, and 338-352; these read QAERQDTGSWKAAEDARG, PEAEPGTHRDRS, ERMVPMRDGERAR, EADKGDQQDEVDEKREAEV, and EAERTGEMTEGHIAE. The segment covering 353 to 370 has biased composition (acidic residues); it reads EEAMGEQETEGSFEDEER. Position 364 is a phosphoserine (Ser364). Residues 384–397 show a composition bias toward basic and acidic residues; that stretch reads EEVRAEESSREKRN. Acidic residues predominate over residues 415-425; sequence PDWEDSPEVST. Composition is skewed to basic and acidic residues over residues 444-458 and 466-475; these read LRVKVTEGQDPELVR and QLEEGQKGQE. Phosphoserine is present on residues Ser484 and Ser520. Basic and acidic residues-rich tracts occupy residues 514 to 531 and 672 to 687; these read GVDRRNSQEVKADAEAGK and GRGEAGRGTELEETTE. The segment covering 709-721 has biased composition (acidic residues); the sequence is QEIDGTEEGEQAE. Residues 837–853 are compositionally biased toward low complexity; sequence SRLDVSVPRSRVLLSRS. Residues 854 to 863 show a composition bias toward basic residues; sequence SSRRRSRPSF.

As to quaternary structure, homodimer. In terms of processing, there are 2 forms in macrophages, the membrane-binding proteins 200 kDa (MBP 200) and 235 kDa (MBP 235), that can be reduced into a single active ligand-binding species with intermediate mobility (MBP 200R). In terms of tissue distribution, highly expressed in spleen, lung and skeletal muscle, and weakly in brain, heart, kidney, and testis.

Its subcellular location is the cell membrane. In terms of biological role, macrophage receptor that binds to the apolipoprotein B48 (APOB) of dietary triglyceride (TG)-rich lipoproteins (TRL) or to a like domain of APOB in hypertriglyceridemic very low density lipoprotein (HTG-VLDL). Binds and internalizes TRL when out of the context of the macrophage. May provide essential lipids to reticuloendothelial cells. Could also be involved in foam cell formation with elevated TRL and remnant lipoprotein (RLP). Mediates the rapid high-affinity uptake of chylomicrons (CM), HTG-VLDL, and trypsinized (tryp) VLDL devoid of APOE in vitro in macrophages. The sequence is that of Apolipoprotein B receptor from Mus musculus (Mouse).